The sequence spans 369 residues: Phospho-N-acetylmuramoyl-pentapeptide-transferase (369 aa).

A run of 10 helical transmembrane segments spans residues 30-50 (AAAI…IGYL), 73-93 (LPTM…LLWA), 99-119 (YVWL…IDDY), 140-160 (VSLG…SVLL), 171-191 (LMID…TAVS), 202-222 (GLAA…AYLT), 239-259 (GGEV…FLWF), 266-286 (IFMG…IALL), 291-311 (LLLP…SLQV), and 346-366 (KIVI…LMTL).

This sequence belongs to the glycosyltransferase 4 family. MraY subfamily. Mg(2+) serves as cofactor.

The protein resides in the cell inner membrane. The enzyme catalyses UDP-N-acetyl-alpha-D-muramoyl-L-alanyl-gamma-D-glutamyl-meso-2,6-diaminopimeloyl-D-alanyl-D-alanine + di-trans,octa-cis-undecaprenyl phosphate = di-trans,octa-cis-undecaprenyl diphospho-N-acetyl-alpha-D-muramoyl-L-alanyl-D-glutamyl-meso-2,6-diaminopimeloyl-D-alanyl-D-alanine + UMP. It functions in the pathway cell wall biogenesis; peptidoglycan biosynthesis. Its function is as follows. Catalyzes the initial step of the lipid cycle reactions in the biosynthesis of the cell wall peptidoglycan: transfers peptidoglycan precursor phospho-MurNAc-pentapeptide from UDP-MurNAc-pentapeptide onto the lipid carrier undecaprenyl phosphate, yielding undecaprenyl-pyrophosphoryl-MurNAc-pentapeptide, known as lipid I. This Chlorobium phaeobacteroides (strain BS1) protein is Phospho-N-acetylmuramoyl-pentapeptide-transferase.